Consider the following 473-residue polypeptide: Lactate utilization protein B (473 aa).

4Fe-4S ferredoxin-type domains lie at 302–332 and 351–380; these read GSEF…GHSY and YNDY…LHDL. Residues C311, C314, C317, C321, C364, C367, and C371 each contribute to the [4Fe-4S] cluster site.

It belongs to the LutB/YkgF family.

Its function is as follows. Is involved in L-lactate degradation and allows cells to grow with lactate as the sole carbon source. Has probably a role as an electron transporter during oxidation of L-lactate. This chain is Lactate utilization protein B, found in Bacillus cereus (strain AH820).